Reading from the N-terminus, the 623-residue chain is Methionine--tRNA ligase (623 aa).

The short motif at 11–21 (PYANGPRHIGH) is the 'HIGH' region element. C143, C146, C156, and C159 together coordinate Zn(2+). Positions 347–351 (KFSSS) match the 'KMSKS' region motif. An ATP-binding site is contributed by S350.

It belongs to the class-I aminoacyl-tRNA synthetase family. MetG type 1 subfamily. Monomer. Zn(2+) serves as cofactor.

Its subcellular location is the cytoplasm. The enzyme catalyses tRNA(Met) + L-methionine + ATP = L-methionyl-tRNA(Met) + AMP + diphosphate. Is required not only for elongation of protein synthesis but also for the initiation of all mRNA translation through initiator tRNA(fMet) aminoacylation. This chain is Methionine--tRNA ligase, found in Bifidobacterium animalis subsp. lactis (strain AD011).